Consider the following 336-residue polypeptide: UDP-N-acetylglucosamine--N-acetylmuramyl-(pentapeptide) pyrophosphoryl-undecaprenol N-acetylglucosamine transferase (336 aa).

UDP-N-acetyl-alpha-D-glucosamine contacts are provided by residues 10 to 12, asparagine 124, arginine 157, serine 179, and glutamine 277; that span reads TGG.

Belongs to the glycosyltransferase 28 family. MurG subfamily.

The protein resides in the cell inner membrane. It catalyses the reaction di-trans,octa-cis-undecaprenyl diphospho-N-acetyl-alpha-D-muramoyl-L-alanyl-D-glutamyl-meso-2,6-diaminopimeloyl-D-alanyl-D-alanine + UDP-N-acetyl-alpha-D-glucosamine = di-trans,octa-cis-undecaprenyl diphospho-[N-acetyl-alpha-D-glucosaminyl-(1-&gt;4)]-N-acetyl-alpha-D-muramoyl-L-alanyl-D-glutamyl-meso-2,6-diaminopimeloyl-D-alanyl-D-alanine + UDP + H(+). Its pathway is cell wall biogenesis; peptidoglycan biosynthesis. Functionally, cell wall formation. Catalyzes the transfer of a GlcNAc subunit on undecaprenyl-pyrophosphoryl-MurNAc-pentapeptide (lipid intermediate I) to form undecaprenyl-pyrophosphoryl-MurNAc-(pentapeptide)GlcNAc (lipid intermediate II). The protein is UDP-N-acetylglucosamine--N-acetylmuramyl-(pentapeptide) pyrophosphoryl-undecaprenol N-acetylglucosamine transferase of Wolinella succinogenes (strain ATCC 29543 / DSM 1740 / CCUG 13145 / JCM 31913 / LMG 7466 / NCTC 11488 / FDC 602W) (Vibrio succinogenes).